Reading from the N-terminus, the 123-residue chain is Large ribosomal subunit protein bL17 (123 aa).

The protein belongs to the bacterial ribosomal protein bL17 family. Part of the 50S ribosomal subunit. Contacts protein L32.

This is Large ribosomal subunit protein bL17 from Borreliella burgdorferi (strain ZS7) (Borrelia burgdorferi).